A 207-amino-acid polypeptide reads, in one-letter code: Small ribosomal subunit protein uS4 (207 aa).

The segment at Lys-33–Asn-54 is disordered. A compositionally biased stretch (polar residues) spans Gly-42–Gly-53. An S4 RNA-binding domain is found at Ser-97–Leu-160.

Belongs to the universal ribosomal protein uS4 family. Part of the 30S ribosomal subunit. Contacts protein S5. The interaction surface between S4 and S5 is involved in control of translational fidelity.

Its function is as follows. One of the primary rRNA binding proteins, it binds directly to 16S rRNA where it nucleates assembly of the body of the 30S subunit. With S5 and S12 plays an important role in translational accuracy. The protein is Small ribosomal subunit protein uS4 of Cupriavidus pinatubonensis (strain JMP 134 / LMG 1197) (Cupriavidus necator (strain JMP 134)).